Reading from the N-terminus, the 191-residue chain is Probable DNA-directed RNA polymerase subunit delta (191 aa).

Residues 14-83 (LSMIEVARAI…GDNKWGLRSW (70 aa)) enclose the HTH HARE-type domain. 2 stretches are compositionally biased toward acidic residues: residues 119 to 133 (EDAIDYNDDDPEDEN) and 143 to 191 (YDND…ETND). The tract at residues 119–191 (EDAIDYNDDD…DDDYEDETND (73 aa)) is disordered.

It belongs to the RpoE family. As to quaternary structure, RNAP is composed of a core of 2 alpha, a beta and a beta' subunits. The core is associated with a delta subunit and one of several sigma factors.

Participates in both the initiation and recycling phases of transcription. In the presence of the delta subunit, RNAP displays an increased specificity of transcription, a decreased affinity for nucleic acids, and an increased efficiency of RNA synthesis because of enhanced recycling. In Streptococcus thermophilus (strain ATCC BAA-491 / LMD-9), this protein is Probable DNA-directed RNA polymerase subunit delta.